Here is a 530-residue protein sequence, read N- to C-terminus: Bifunctional purine biosynthesis protein PurH (530 aa).

Residues 1–148 (MNNARPIHRA…KNHKDVAIVV (148 aa)) enclose the MGS-like domain.

It belongs to the PurH family.

It catalyses the reaction (6R)-10-formyltetrahydrofolate + 5-amino-1-(5-phospho-beta-D-ribosyl)imidazole-4-carboxamide = 5-formamido-1-(5-phospho-D-ribosyl)imidazole-4-carboxamide + (6S)-5,6,7,8-tetrahydrofolate. It carries out the reaction IMP + H2O = 5-formamido-1-(5-phospho-D-ribosyl)imidazole-4-carboxamide. It functions in the pathway purine metabolism; IMP biosynthesis via de novo pathway; 5-formamido-1-(5-phospho-D-ribosyl)imidazole-4-carboxamide from 5-amino-1-(5-phospho-D-ribosyl)imidazole-4-carboxamide (10-formyl THF route): step 1/1. Its pathway is purine metabolism; IMP biosynthesis via de novo pathway; IMP from 5-formamido-1-(5-phospho-D-ribosyl)imidazole-4-carboxamide: step 1/1. The chain is Bifunctional purine biosynthesis protein PurH from Vibrio cholerae serotype O1 (strain ATCC 39541 / Classical Ogawa 395 / O395).